A 187-amino-acid polypeptide reads, in one-letter code: Probable chorismate pyruvate-lyase (187 aa).

3 residues coordinate substrate: arginine 81, leucine 119, and glutamate 178.

This sequence belongs to the UbiC family.

Its subcellular location is the cytoplasm. The catalysed reaction is chorismate = 4-hydroxybenzoate + pyruvate. Its pathway is cofactor biosynthesis; ubiquinone biosynthesis. Functionally, removes the pyruvyl group from chorismate, with concomitant aromatization of the ring, to provide 4-hydroxybenzoate (4HB) for the ubiquinone pathway. The sequence is that of Probable chorismate pyruvate-lyase from Thiobacillus denitrificans (strain ATCC 25259 / T1).